Here is a 255-residue protein sequence, read N- to C-terminus: Syntaxin-6 (255 aa).

Ser-2 is subject to N-acetylserine. Ser-2 carries the phosphoserine modification. An interaction with BLTP3B region spans residues 2 to 112 (SMEDPFFVVK…KDQMSASSVQ (111 aa)). Positions 2-168 (SMEDPFFVVK…QAQQQLIVEQ (167 aa)) are required for interaction with VPS51. Over 2 to 234 (SMEDPFFVVK…VSHMTSDRRQ (233 aa)) the chain is Cytoplasmic. The stretch at 41–74 (EEIDWTTNELRNNLRSIEWDLEDLDETISIVEAN) forms a coiled coil. Phosphoserine occurs at positions 129 and 152. A t-SNARE coiled-coil homology domain is found at 163-225 (QLIVEQQDEQ…DNVMKKLAKV (63 aa)). A helical; Anchor for type IV membrane protein transmembrane segment spans residues 235–255 (WCAIAILFAVLLVVLTLFLVL).

It belongs to the syntaxin family. Identified in a complex containing STX6, STX12, VAMP4 and VTI1A. Binds EEA1. Interacts with VPS45A and GOPC. Interacts with MARCHF2; the interaction promotes MARCHF2-mediated ubiquitination and degradation of CFTR. Interacts with MARCHF3. Interacts with BLTP3B (via C-terminal coiled-coil domain). Interacts with BAIAP3; this interaction is increased in the presence of calcium. Interacts (via N-terminus) with VPS51. Interacts with VPS13B. As to expression, widely expressed, with relatively higher expression in brain, lung and kidney.

The protein localises to the golgi apparatus membrane. It is found in the golgi apparatus. It localises to the trans-Golgi network membrane. Its subcellular location is the recycling endosome membrane. Its function is as follows. SNARE promoting movement of transport vesicles to target membranes. Targets endosomes to the trans-Golgi network, and may therefore function in retrograde trafficking. Together with SNARE STX12, promotes movement of vesicles from endosomes to the cell membrane, and may therefore function in the endocytic recycling pathway. This Rattus norvegicus (Rat) protein is Syntaxin-6 (Stx6).